Reading from the N-terminus, the 317-residue chain is MAELACFCYPHLENDSYKFIPFNSLAIKCMLTAKVDKKDQDKFYNSIVYGIAPPPQFKKRYNTNDNSRGMNYETPMFNKVAILICEALNSIKVTQSDVANVLSRVVSVRHLENLVLRKENHQDVLFHSKELLLKAVLIAIGQSKEIETTATAEGGEIVFQNAAFTMWKLTYLDHKLMPILDQNFIEYKITLNEDKPISDICVKELVAELRWQYNRFAVITHGKGHYRVVKYSSVANHADRVFATYKNNAKSGNVTDFNLLDQRIIWQNWYAFTSSMKQGNTLDVCKKLLFQKMKQEKNPFKGLSTDRKMDEVSHVGI.

Residues 107-109 (SVR), lysine 188, and 221-223 (HGK) contribute to the ATP site. The tract at residues 205–241 (LVAELRWQYNRFAVITHGKGHYRVVKYSSVANHADRV) is RNA-binding. Histidine 225 (for NTPase and RTPase activities) is an active-site residue. Arginine 227 is a binding site for ATP.

Belongs to the rotavirus NSP2 family. As to quaternary structure, homooctamer. Interacts with VP1; this interaction is weak. Interacts with NSP5; this interaction leads to up-regulation of NSP5 phosphorylation and formation of viral factories. Interacts with host DCP1A, DCP1B, DDX6, EDC4 and EIF2S1/eIF2-alpha; these interactions are probably part of the sequestration of some host SGs and PBs proteins in viral factories. Mg(2+) is required as a cofactor.

Its subcellular location is the host cytoplasm. Participates in replication and packaging of the viral genome. Plays a crucial role, together with NSP5, in the formation of virus factories (viroplasms), which are large inclusions in the host cytoplasm where replication intermediates are assembled and viral RNA replication takes place. Displays ssRNA binding, NTPase, RNA triphosphatase (RTPase) and ATP-independent helix-unwinding activities. The unwinding activity may prepare and organize plus-strand RNAs for packaging and replication by removing interfering secondary structures. The RTPase activity plays a role in the removal of the gamma-phosphate from the rotavirus RNA minus strands of dsRNA genome segments. Participates in the selective exclusion of host proteins from stress granules (SG) and P bodies (PB). Also participates in the sequestration of these remodeled organelles in viral factories. The sequence is that of Non-structural protein 2 from Rotavirus A (strain RVA/Human/United States/P/1974/G3P1A[8]) (RV-A).